Here is a 431-residue protein sequence, read N- to C-terminus: Glutamate-1-semialdehyde 2,1-aminomutase (431 aa).

Lys269 is modified (N6-(pyridoxal phosphate)lysine).

It belongs to the class-III pyridoxal-phosphate-dependent aminotransferase family. HemL subfamily. In terms of assembly, homodimer. Pyridoxal 5'-phosphate serves as cofactor.

Its subcellular location is the cytoplasm. The enzyme catalyses (S)-4-amino-5-oxopentanoate = 5-aminolevulinate. It participates in porphyrin-containing compound metabolism; protoporphyrin-IX biosynthesis; 5-aminolevulinate from L-glutamyl-tRNA(Glu): step 2/2. Its pathway is porphyrin-containing compound metabolism; chlorophyll biosynthesis. The chain is Glutamate-1-semialdehyde 2,1-aminomutase from Chlorobium chlorochromatii (strain CaD3).